The sequence spans 132 residues: Monothiol glutaredoxin-S9 (132 aa).

The segment at Ala-16 to Val-38 is disordered. The Glutaredoxin domain maps to Glu-35–Trp-131. [2Fe-2S] cluster is bound at residue Cys-55. Residues Ala-129 to Leu-132 carry the Responsive for interaction with TGA factors motif.

The protein belongs to the glutaredoxin family. CC-type subfamily.

The protein localises to the cytoplasm. It localises to the nucleus. Functionally, may only reduce GSH-thiol disulfides, but not protein disulfides. The polypeptide is Monothiol glutaredoxin-S9 (GRXS9) (Oryza sativa subsp. japonica (Rice)).